The following is a 202-amino-acid chain: 3-isopropylmalate dehydratase small subunit (202 aa).

The protein belongs to the LeuD family. LeuD type 1 subfamily. As to quaternary structure, heterodimer of LeuC and LeuD.

It catalyses the reaction (2R,3S)-3-isopropylmalate = (2S)-2-isopropylmalate. Its pathway is amino-acid biosynthesis; L-leucine biosynthesis; L-leucine from 3-methyl-2-oxobutanoate: step 2/4. In terms of biological role, catalyzes the isomerization between 2-isopropylmalate and 3-isopropylmalate, via the formation of 2-isopropylmaleate. The sequence is that of 3-isopropylmalate dehydratase small subunit from Rhizobium rhizogenes (strain K84 / ATCC BAA-868) (Agrobacterium radiobacter).